The sequence spans 104 residues: Large ribosomal subunit protein bL21 (104 aa).

The protein belongs to the bacterial ribosomal protein bL21 family. As to quaternary structure, part of the 50S ribosomal subunit. Contacts protein L20.

In terms of biological role, this protein binds to 23S rRNA in the presence of protein L20. The sequence is that of Large ribosomal subunit protein bL21 from Pseudomonas putida (strain GB-1).